The primary structure comprises 354 residues: COP9 signalosome complex subunit 5 (354 aa).

In terms of domain architecture, MPN spans 56–193 (VLVSSIALVK…IGAFRTYPKD (138 aa)). His139, His141, and Asp152 together coordinate Zn(2+). A JAMM motif motif is present at residues 139 to 152 (HSHPGYGCWLSGID). Residues 193–212 (DYKPPKKATKQNQDQSVPLS) are disordered.

Belongs to the peptidase M67A family. CSN5 subfamily. As to quaternary structure, component of the COP9 signalosome (CSN) complex.

The protein localises to the cytoplasm. It localises to the nucleus. Functionally, catalytic Component of the COP9 signalosome (CSN) complex that acts as an regulator of the ubiquitin (Ubl) conjugation pathway by mediating the deneddylation of the cullin subunit of SCF-type E3 ubiquitin-protein ligase complexes. In Yarrowia lipolytica (strain CLIB 122 / E 150) (Yeast), this protein is COP9 signalosome complex subunit 5 (RRI1).